A 308-amino-acid chain; its full sequence is Cytochrome b (308 aa).

A run of 4 helical transmembrane segments spans residues 1–21, 45–66, 81–101, and 146–166; these read FGSLLGICLLTQIITGLLLAM, WLIRNLHANGASFFFICIYFHI, WNIGVILLLTLMATAFVGYVL, and FFALHFLLPFVIAGLTLVHLT. Heme b contacts are provided by His51 and His65. His150 and His164 together coordinate heme b. His169 lines the a ubiquinone pocket. 3 helical membrane-spanning segments follow: residues 194-214, 256-276, and 288-308; these read TKDILGFALMFILLVSLALFS, LGGVLALAASVLVLFLLPLLH, and LSQILFWALVANLLILTWVGS.

It belongs to the cytochrome b family. In terms of assembly, the cytochrome bc1 complex contains 11 subunits: 3 respiratory subunits (MT-CYB, CYC1 and UQCRFS1), 2 core proteins (UQCRC1 and UQCRC2) and 6 low-molecular weight proteins (UQCRH/QCR6, UQCRB/QCR7, UQCRQ/QCR8, UQCR10/QCR9, UQCR11/QCR10 and a cleavage product of UQCRFS1). This cytochrome bc1 complex then forms a dimer. The cofactor is heme b.

The protein localises to the mitochondrion inner membrane. Its function is as follows. Component of the ubiquinol-cytochrome c reductase complex (complex III or cytochrome b-c1 complex) that is part of the mitochondrial respiratory chain. The b-c1 complex mediates electron transfer from ubiquinol to cytochrome c. Contributes to the generation of a proton gradient across the mitochondrial membrane that is then used for ATP synthesis. The sequence is that of Cytochrome b (MT-CYB) from Baeolophus inornatus (Oak titmouse).